We begin with the raw amino-acid sequence, 503 residues long: Cobyric acid synthase (503 aa).

In terms of domain architecture, GATase cobBQ-type spans 245–447; that stretch reads DISIAIIRLP…LHGIFDEISL (203 aa). Cys-326 acts as the Nucleophile in catalysis. Residue His-439 is part of the active site.

This sequence belongs to the CobB/CobQ family. CobQ subfamily.

Its pathway is cofactor biosynthesis; adenosylcobalamin biosynthesis. Catalyzes amidations at positions B, D, E, and G on adenosylcobyrinic A,C-diamide. NH(2) groups are provided by glutamine, and one molecule of ATP is hydrogenolyzed for each amidation. In Alkaliphilus metalliredigens (strain QYMF), this protein is Cobyric acid synthase.